Consider the following 545-residue polypeptide: Pectinesterase/pectinesterase inhibitor (545 aa).

An N-terminal signal peptide occupies residues 1–37 (MEINQPNLLEASKSCYSKITFFLLVISFAALVSTGFS). The pectinesterase inhibitor stretch occupies residues 38 to 191 (SPELSLHHKI…ILRARTSLAI (154 aa)). Residues 38–228 (SPELSLHHKI…RRLLQTLGKD (191 aa)) constitute a propeptide that is removed on maturation. N-linked (GlcNAc...) asparagine glycosylation is present at N135. The segment at 232 to 530 (DIVVAKDGSG…TVAELIQGGS (299 aa)) is pectinesterase. Residues T307 and Q337 each contribute to the substrate site. A disulfide bond links C326 and C353. Catalysis depends on D360, which acts as the Proton donor; for pectinesterase activity. N-linked (GlcNAc...) (complex) asparagine glycosylation occurs at N375. D381 functions as the Nucleophile; for pectinesterase activity in the catalytic mechanism. Cysteines 394 and 428 form a disulfide. Substrate is bound by residues R449 and W451.

This sequence in the N-terminal section; belongs to the PMEI family. It in the C-terminal section; belongs to the pectinesterase family. In terms of processing, N-glycosylated.

Its subcellular location is the secreted. The protein localises to the cell wall. The catalysed reaction is [(1-&gt;4)-alpha-D-galacturonosyl methyl ester](n) + n H2O = [(1-&gt;4)-alpha-D-galacturonosyl](n) + n methanol + n H(+). Its pathway is glycan metabolism; pectin degradation; 2-dehydro-3-deoxy-D-gluconate from pectin: step 1/5. Acts in the modification of cell walls via demethylesterification of cell wall pectin. In Ficus pumila var. awkeotsang (Jelly fig), this protein is Pectinesterase/pectinesterase inhibitor.